The following is a 938-amino-acid chain: MTLLGSEHSLLIRSKFRSVLQLRLQQRRTQEQLANQGIIPPLKRPAEFHEQRKHLDSDKAKNSLKRKARNRCNSADLVNMHILQASTAERSIPTAQMKLKRARLADDLNEKIALRPGPLELVEKNILPVDSAVKEAIKGNQVSFSKSTDAFAFEEDSSSDGLSPDQTRSEDPQNSAGSPPDAKASDTPSTGSLGTNQDLASGSENDRNDSASQPSHQSDAGKQGLGPPSTPIAVHAAVKSKSLGDSKNRHKKPKDPKPKVKKLKYHQYIPPDQKAEKSPPPMDSAYARLLQQQQLFLQLQILSQQQQQQQHRFSYLGMHQAQLKEPNEQMVRNPNSSSTPLSNTPLSPVKNSFSGQTGVSSFKPGPLPPNLDDLKVSELRQQLRIRGLPVSGTKTALMDRLRPFQDCSGNPVPNFGDITTVTFPVTPNTLPNYQSSSSTSALSNGFYHFGSTSSSPPISPASSDLSVAGSLPDTFNDASPSFGLHPSPVHVCTEESLMSSLNGGSVPSELDGLDSEKDKMLVEKQKVINELTWKLQQEQRQVEELRMQLQKQKRNNCSEKKPLPFLAASIKQEEAVSSCPFASQVPVKRQSSSSECHPPACEAAQLQPLGNAHCVESSDQTNVLSSTFLSPQCSPQHSPLGAVKSPQHISLPPSPNNPHFLPSSSGAQGEGHRVSSPISSQVCTAQMAGLHSSDKVGPKFSIPSPTFSKSSSAISEVTQPPSYEDAVKQQMTRSQQMDELLDVLIESGEMPADAREDHSCLQKVPKIPRSSRSPTAVLTKPSASFEQASSGSQIPFDPYATDSDEHLEVLLNSQSPLGKMSDVTLLKIGSEEPHFDGIMDGFSGKAAEDLFNAHEILPGPLSPMQTQFSPSSVDSNGLQLSFTESPWETMEWLDLTPPNSTPGFSALTTSSPSIFNIDFLDVTDLNLNSSMDLHLQQW.

The MEF2C-binding motif lies at 12–27 (IRSKFRSVLQLRLQQR). An RPEL 1 repeat occupies 18–43 (SVLQLRLQQRRTQEQLANQGIIPPLK). Over residues 48-61 (FHEQRKHLDSDKAK) the composition is skewed to basic and acidic residues. The tract at residues 48 to 68 (FHEQRKHLDSDKAKNSLKRKA) is disordered. RPEL repeat units lie at residues 62-87 (NSLK…QAST) and 106-131 (DDLN…PVDS). The segment at 153–205 (FEEDSSSDGLSPDQTRSEDPQNSAGSPPDAKASDTPSTGSLGTNQDLASGSEN) is HDAC5-binding. Positions 154–281 (EEDSSSDGLS…DQKAEKSPPP (128 aa)) are disordered. Polar residues-rich tracts occupy residues 159–177 (SDGL…NSAG), 186–203 (DTPS…ASGS), and 210–220 (SASQPSHQSDA). The segment covering 248–265 (NRHKKPKDPKPKVKKLKY) has biased composition (basic residues). In terms of domain architecture, SAP spans 371–405 (LDDLKVSELRQQLRIRGLPVSGTKTALMDRLRPFQ). A phosphoserine; by GSK3-beta mark is found at serine 451, serine 455, serine 459, and serine 463. The stretch at 516-561 (EKDKMLVEKQKVINELTWKLQQEQRQVEELRMQLQKQKRNNCSEKK) forms a coiled coil. Residues serine 626, serine 630, serine 634, and serine 638 each carry the phosphoserine; by GSK3-beta modification. 2 disordered regions span residues 635 to 678 (PQHS…SSPI) and 693 to 734 (SDKV…MTRS). Residues 699 to 715 (KFSIPSPTFSKSSSAIS) are compositionally biased toward low complexity. A required for interaction with and ubiquitination by STUB1 region spans residues 717–938 (VTQPPSYEDA…SSMDLHLQQW (222 aa)). Phosphoserine; by MAPK1 and MAPK3 is present on residues serine 815, serine 862, and serine 869. Position 896 is a phosphothreonine; by MAPK1 and MAPK3 (threonine 896).

Homodimer. Interacts with SRF, its association does not depend on specific DNA sequences for ternary complex formation. Interacts with MLLT7/FOXO4. Interacts (via C-terminal) with EP300 (via the CREB-binding domain). Interacts with HDAC4 and HDAC5. Interacts with MEF2C. Interacts (via C-terminus) with STUB1/CHIP. Interacts with PURB. Post-translationally, ubiquitinated; by STUB1/CHIP at the C-terminus, leading to its degradation by the proteasome. Phosphorylation by GSK3B is required for STUB1/CHIP-mediated ubiquitination. In terms of processing, phosphorylation negatively regulates the intrinsic myocardin transcriptional activity. Phosphorylated; by GSK3B. As to expression, expressed in the heart, aorta and bladder. Expressed in smooth muscle cell-containing tissues: stomach, small intestine, colon, lung, placenta and uterus. Very faint expression in prostate and skeletal muscle.

The protein resides in the nucleus. Smooth muscle cells (SM) and cardiac muscle cells-specific transcriptional factor which uses the canonical single or multiple CArG boxes DNA sequence. Acts as a cofactor of serum response factor (SRF) with the potential to modulate SRF-target genes. Plays a crucial role in cardiogenesis, urinary bladder development, and differentiation of the smooth muscle cell lineage (myogenesis). Positively regulates the transcription of genes involved in vascular smooth muscle contraction. The chain is Myocardin (MYOCD) from Homo sapiens (Human).